Consider the following 962-residue polypeptide: Protease 3 (962 aa).

The N-terminal stretch at 1 to 23 is a signal peptide; the sequence is MPRSTWFKALLLFVALWAPLSQA. H88 serves as a coordination point for Zn(2+). The Proton acceptor role is filled by E91. Zn(2+) is bound by residues H92 and E169.

It belongs to the peptidase M16 family. In terms of assembly, monomer. The cofactor is Zn(2+).

It is found in the periplasm. It carries out the reaction Preferential cleavage of 16-Tyr-|-Leu-17 and 25-Phe-|-Tyr-26 bonds of oxidized insulin B chain. Also acts on other substrates of Mw less than 7 kDa such as insulin and glucagon.. Endopeptidase that degrades small peptides of less than 7 kDa, such as glucagon and insulin. In Shigella flexneri, this protein is Protease 3 (ptrA).